The primary structure comprises 117 residues: Immunoglobulin lambda variable 7-46 (117 aa).

The first 19 residues, 1–19, serve as a signal peptide directing secretion; the sequence is MAWTPLFLFLLTCCPGSNS. Positions 20 to 44 are framework-1; that stretch reads QAVVTQEPSLTVSPGGTVTLTCGSS. An Ig-like domain is found at 20-117; it reads QAVVTQEPSL…YCLLSYSGAR (98 aa). An intrachain disulfide couples Cys41 to Cys109. The interval 45 to 53 is complementarity-determining-1; it reads TGAVTSGHY. The segment at 54 to 70 is framework-2; sequence PYWFQQKPGQAPRTLIY. The interval 71-73 is complementarity-determining-2; the sequence is DTS. The segment at 74 to 109 is framework-3; that stretch reads NKHSWTPARFSGSLLGGKAALTLLGAQPEDEAEYYC. Residues 110-117 are complementarity-determining-3; it reads LLSYSGAR.

Immunoglobulins are composed of two identical heavy chains and two identical light chains; disulfide-linked.

It is found in the secreted. The protein resides in the cell membrane. Functionally, v region of the variable domain of immunoglobulin light chains that participates in the antigen recognition. Immunoglobulins, also known as antibodies, are membrane-bound or secreted glycoproteins produced by B lymphocytes. In the recognition phase of humoral immunity, the membrane-bound immunoglobulins serve as receptors which, upon binding of a specific antigen, trigger the clonal expansion and differentiation of B lymphocytes into immunoglobulins-secreting plasma cells. Secreted immunoglobulins mediate the effector phase of humoral immunity, which results in the elimination of bound antigens. The antigen binding site is formed by the variable domain of one heavy chain, together with that of its associated light chain. Thus, each immunoglobulin has two antigen binding sites with remarkable affinity for a particular antigen. The variable domains are assembled by a process called V-(D)-J rearrangement and can then be subjected to somatic hypermutations which, after exposure to antigen and selection, allow affinity maturation for a particular antigen. In Homo sapiens (Human), this protein is Immunoglobulin lambda variable 7-46.